The sequence spans 398 residues: Acetate kinase 1 (398 aa).

Residue Asn9 coordinates Mg(2+). Lys16 provides a ligand contact to ATP. Arg89 serves as a coordination point for substrate. The Proton donor/acceptor role is filled by Asp146. ATP is bound by residues 206–210, 281–283, and 329–333; these read HLGNG, DCR, and GIGEN. Residue Glu384 participates in Mg(2+) binding.

This sequence belongs to the acetokinase family. As to quaternary structure, homodimer. The cofactor is Mg(2+). It depends on Mn(2+) as a cofactor.

Its subcellular location is the cytoplasm. The enzyme catalyses acetate + ATP = acetyl phosphate + ADP. Its pathway is metabolic intermediate biosynthesis; acetyl-CoA biosynthesis; acetyl-CoA from acetate: step 1/2. In terms of biological role, catalyzes the formation of acetyl phosphate from acetate and ATP. Can also catalyze the reverse reaction. This Vibrio vulnificus (strain CMCP6) protein is Acetate kinase 1.